A 303-amino-acid chain; its full sequence is Quinolinate synthase (303 aa).

Residues His-24 and Ser-41 each contribute to the iminosuccinate site. Cys-86 is a binding site for [4Fe-4S] cluster. Residues 112–114 (YVN) and Ser-129 each bind iminosuccinate. Cys-172 serves as a coordination point for [4Fe-4S] cluster. Residues 198-200 (HPE) and Thr-215 each bind iminosuccinate. Position 260 (Cys-260) interacts with [4Fe-4S] cluster.

This sequence belongs to the quinolinate synthase family. Type 2 subfamily. [4Fe-4S] cluster serves as cofactor.

Its subcellular location is the cytoplasm. The enzyme catalyses iminosuccinate + dihydroxyacetone phosphate = quinolinate + phosphate + 2 H2O + H(+). It functions in the pathway cofactor biosynthesis; NAD(+) biosynthesis; quinolinate from iminoaspartate: step 1/1. Its function is as follows. Catalyzes the condensation of iminoaspartate with dihydroxyacetone phosphate to form quinolinate. This Alkaliphilus metalliredigens (strain QYMF) protein is Quinolinate synthase.